The sequence spans 408 residues: uncharacterized protein (408 aa).

The protein belongs to the protein kinase superfamily. ADCK protein kinase family.

This is an uncharacterized protein from Synechocystis sp. (strain ATCC 27184 / PCC 6803 / Kazusa).